Reading from the N-terminus, the 155-residue chain is Ribosomal RNA large subunit methyltransferase H (155 aa).

S-adenosyl-L-methionine is bound by residues L73, G104, and 123-128 (LSPLTL).

This sequence belongs to the RNA methyltransferase RlmH family. Homodimer.

It is found in the cytoplasm. The enzyme catalyses pseudouridine(1915) in 23S rRNA + S-adenosyl-L-methionine = N(3)-methylpseudouridine(1915) in 23S rRNA + S-adenosyl-L-homocysteine + H(+). Functionally, specifically methylates the pseudouridine at position 1915 (m3Psi1915) in 23S rRNA. The polypeptide is Ribosomal RNA large subunit methyltransferase H (Pseudomonas putida (strain GB-1)).